Consider the following 193-residue polypeptide: MTDYLLLFVGTVLVNNFVLVKFLGLCPFMGVSKKLETAMGMGLATTFVMTLASICAWLIDTWILIPLNLIYLRTLAFILVIAVVVQFTEMVVRKTSPVLYRLLGIFLPLITTNCAVLGVALLNINLGHNFLQSALYGFSAAVGFSLVMVLFAAIRERLAVADVPAPFRGNAIALITAGLMSLAFMGFSGLVKL.

A run of 6 helical transmembrane segments spans residues 5–25 (LLLFVGTVLVNNFVLVKFLGL), 39–59 (MGMGLATTFVMTLASICAWLI), 63–83 (ILIPLNLIYLRTLAFILVIAV), 102–122 (LLGIFLPLITTNCAVLGVALL), 134–154 (ALYGFSAAVGFSLVMVLFAAI), and 171–191 (AIALITAGLMSLAFMGFSGLV).

Belongs to the NqrDE/RnfAE family. The complex is composed of six subunits: RsxA, RsxB, RsxC, RsxD, RsxE and RsxG.

It localises to the cell inner membrane. In terms of biological role, part of a membrane-bound complex that couples electron transfer with translocation of ions across the membrane. Required to maintain the reduced state of SoxR. The chain is Ion-translocating oxidoreductase complex subunit A from Shigella boydii serotype 18 (strain CDC 3083-94 / BS512).